A 249-amino-acid chain; its full sequence is MVSFDATEALAPYREGRGYGAILFDRERLRQADASLFSPQSWGDRARPVDAGGRGGAWFVDAPFGHSVLRQYLRGGMAARVSRDRYLWKGAGRTRSFAEFRLMRELIKRKLPVPRPLAACYLREGVGYRAALLMERLENVRSLADHAQVAGRGAPWEATGQLIARFHRAGLDHADLNAHNILFDAGGHGWLIDFDRGVLRIPATRWRERNLKRLHRSLLKLRGNRSREDVDKDYARLHRAYELAWGRGY.

The active site involves Asp175.

It belongs to the protein kinase superfamily. KdkA/RfaP family.

The protein resides in the cell inner membrane. It carries out the reaction an alpha-Kdo-(2-&gt;6)-lipid IVA + ATP = a 4-O-phospho-alpha-Kdo-(2-&gt;6)-lipid IVA + ADP + H(+). Its pathway is bacterial outer membrane biogenesis; LPS core biosynthesis. Catalyzes the ATP-dependent phosphorylation of the 3-deoxy-D-manno-octulosonic acid (Kdo) residue in Kdo-lipid IV(A) at the 4-OH position. This is 3-deoxy-D-manno-octulosonic acid kinase from Xanthomonas euvesicatoria pv. vesicatoria (strain 85-10) (Xanthomonas campestris pv. vesicatoria).